A 512-amino-acid chain; its full sequence is Reduced folate transporter (512 aa).

Met1 carries the post-translational modification N-acetylmethionine. Residues 1–29 (MVPTGQVAEKQAYEEPRQDHELKSWRCLV) are Cytoplasmic-facing. The helical transmembrane segment at 30–50 (FYLCFFGFMAQLRPGESFITP) threads the bilayer. Ile48 and Thr49 together coordinate folate. Topologically, residues 51-62 (FLLERKFTKEQV) are extracellular. Residues 63-85 (TNEIIPMLPYSHLAVLVPVFLLT) traverse the membrane as a helical segment. The Cytoplasmic portion of the chain corresponds to 86 to 89 (DYLR). Residues 90 to 110 (YKPVLVLQCLSFVCVWLLLLL) form a helical membrane-spanning segment. Residues 111-114 (GTSV) lie on the Extracellular side of the membrane. A helical membrane pass occupies residues 115-137 (VHMQLMEVFYSVTMAARIAYSSY). Residues Glu121 and Arg131 each contribute to the folate site. Topologically, residues 138 to 151 (IFSLVHPSRYQRMA) are cytoplasmic. The helical transmembrane segment at 152 to 176 (SYSRAAVLLGVFISSVLGQALVTVG) threads the bilayer. Residue Val162 coordinates folate. Residues 177 to 181 (HISTY) are Extracellular-facing. A helical transmembrane segment spans residues 182 to 200 (TLNCVSLGFILFSLVLSLF). The Cytoplasmic portion of the chain corresponds to 201-266 (LKRPKRSLFF…ELVENARQPQ (66 aa)). The chain crosses the membrane as a helical span at residues 267 to 292 (LRLWCLWWVFNSSGYYLITYYVHVLW). 3 residues coordinate folate: Tyr281, Tyr282, and Tyr286. Residues 293–300 (RSTDSSLS) lie on the Extracellular side of the membrane. A helical transmembrane segment spans residues 301–323 (YNGAVDAASTLLSAITSFSAGFL). Over 324–329 (SIRWTL) the chain is Cytoplasmic. A helical membrane pass occupies residues 330–350 (WSKLVIAGVIAIQASLVFCMF). At 351–353 (QIR) the chain is on the extracellular side. Residues 354–377 (DIWVCYVTFVLFRGAYQFLVPIAT) traverse the membrane as a helical segment. Folate contacts are provided by Arg366 and Gln370. Over 378–391 (FQIASSLSKELCAL) the chain is Cytoplasmic. The chain crosses the membrane as a helical span at residues 392–415 (VFGINTFLATALKTCITLVVSDKR). The required for substrate-binding stretch occupies residues 400–412 (ATALKTCITLVVS). Residues 416-423 (GLGLQVRD) lie on the Extracellular side of the membrane. A helical membrane pass occupies residues 424 to 448 (QFRIYFIYFLMLSITCFAWAGLDGL). Over 449–512 (RYCQRGRHQP…RGDLRVEAKA (64 aa)) the chain is Cytoplasmic. Phosphoserine occurs at positions 467, 472, and 477. The interval 478-512 (LQDGDLRGPQPSAPQLLSEDGMEDDRGDLRVEAKA) is disordered.

This sequence belongs to the reduced folate carrier (RFC) transporter (TC 2.A.48) family.

The protein localises to the cell membrane. It localises to the apical cell membrane. It is found in the basolateral cell membrane. The catalysed reaction is 5-amino-1-(5-phospho-beta-D-ribosyl)imidazole-4-carboxamide(in) + (6S)-5-methyl-5,6,7,8-tetrahydrofolate(out) = 5-amino-1-(5-phospho-beta-D-ribosyl)imidazole-4-carboxamide(out) + (6S)-5-methyl-5,6,7,8-tetrahydrofolate(in). Antiporter that mediates the import of reduced folates, driven by the export of organic anions. Also acts as an importer of immunoreactive cyclic dinucleotides, but with a lower transporter activity. Mechanistically, acts as a secondary active transporter, which exports intracellular organic anions down their concentration gradients to facilitate the uptake of its substrates. Has high affinity for N5-methyltetrahydrofolate, the predominant circulating form of folate. Also mediates the import of antifolate drug methotrexate. 5-amino-4-imidazolecarboxamide riboside (AICAR), when phosphorylated to AICAR monophosphate, can serve as an organic anion for antiporter activity. This Mus musculus (Mouse) protein is Reduced folate transporter.